Consider the following 473-residue polypeptide: Mogroside IIIx synthase (473 aa).

His-21 serves as the catalytic Proton acceptor. The active-site Charge relay is the Asp-123. The UDP-alpha-D-glucose site is built by Thr-274, Gln-337, Trp-355, Asn-356, Ser-357, Glu-360, Asp-376, and Gln-377.

Belongs to the UDP-glycosyltransferase family. Highly expressed in mature fruits.

The enzyme catalyses mogroside IIE + UDP-alpha-D-glucose = mogroside IIIX + UDP + H(+). It carries out the reaction mogroside III + UDP-alpha-D-glucose = siamenoside I + UDP + H(+). It functions in the pathway secondary metabolite biosynthesis; terpenoid biosynthesis. In terms of biological role, UDP-glycosyltransferase involved in the biosynthesis of cucurbitacin and mogroside tetracyclic triterpene natural products (e.g. siamenoside I and mogrosides IV, V and VI). Cucurbitacins have cytotoxic properties and exhibit deterrent taste as a defense barrier against herbivores. Mogrosides are nonsugar highly oxygenated compounds used as high-intensity zero-calorie sweeteners; they also possess pharmacological properties such as regulating immunity, lowering blood sugar and lipid levels, protecting the liver, and acting as antioxidants and antitumor agents. Catalyzes the branched glucosylations of mogroside II-E and mogroside III. The sequence is that of Mogroside IIIx synthase from Siraitia grosvenorii (Monk's fruit).